Reading from the N-terminus, the 128-residue chain is Aspartate 1-decarboxylase (128 aa).

Serine 25 acts as the Schiff-base intermediate with substrate; via pyruvic acid in catalysis. A Pyruvic acid (Ser) modification is found at serine 25. Residue threonine 57 coordinates substrate. Tyrosine 58 serves as the catalytic Proton donor. 73–75 contacts substrate; that stretch reads GSA.

Belongs to the PanD family. In terms of assembly, heterooctamer of four alpha and four beta subunits. Pyruvate serves as cofactor. Post-translationally, is synthesized initially as an inactive proenzyme, which is activated by self-cleavage at a specific serine bond to produce a beta-subunit with a hydroxyl group at its C-terminus and an alpha-subunit with a pyruvoyl group at its N-terminus.

The protein localises to the cytoplasm. It catalyses the reaction L-aspartate + H(+) = beta-alanine + CO2. It functions in the pathway cofactor biosynthesis; (R)-pantothenate biosynthesis; beta-alanine from L-aspartate: step 1/1. Its function is as follows. Catalyzes the pyruvoyl-dependent decarboxylation of aspartate to produce beta-alanine. In Burkholderia mallei (strain NCTC 10247), this protein is Aspartate 1-decarboxylase.